The sequence spans 116 residues: Protein SPIRAL1-like 1 (116 aa).

The segment covering 1 to 12 has biased composition (gly residues); sequence MSRGGSAGGGQS. The tract at residues 1 to 116 is disordered; that stretch reads MSRGGSAGGG…SSLGYLFGGN (116 aa). Positions 27-43 are enriched in pro residues; it reads AAKPAPAAAPAPAPAPA. The span at 44-60 shows a compositional bias: low complexity; that stretch reads PAAAVAAPAEKPSPAKA. Polar residues predominate over residues 72–90; sequence GSRSNNNYHRADGQNTGNF. Gly residues predominate over residues 103–116; that stretch reads PGGGSSLGYLFGGN.

Belongs to the SPIRAL1 family.

Functionally, acts in maintaining the cortical microtubules organization essential for anisotropic cell growth. The polypeptide is Protein SPIRAL1-like 1 (Oryza sativa subsp. japonica (Rice)).